A 504-amino-acid chain; its full sequence is Protein anon-37Cs (504 aa).

As to expression, low levels seen in adult heads, thorax, abdomen and ovaries, high levels in testes.

The protein resides in the cytoplasm. Functionally, has a non-vital function. The sequence is that of Protein anon-37Cs (anon-37Cs) from Drosophila melanogaster (Fruit fly).